A 280-amino-acid chain; its full sequence is Diaminopimelate epimerase (280 aa).

Residues Asn-13 and Asn-66 each contribute to the substrate site. Catalysis depends on Cys-75, which acts as the Proton donor. Residues 76-77, Asn-162, Asn-195, and 213-214 each bind substrate; these read GN and ER. Cys-222 acts as the Proton acceptor in catalysis. Residue 223–224 coordinates substrate; sequence GT.

Belongs to the diaminopimelate epimerase family. Homodimer.

The protein localises to the cytoplasm. It carries out the reaction (2S,6S)-2,6-diaminopimelate = meso-2,6-diaminopimelate. It functions in the pathway amino-acid biosynthesis; L-lysine biosynthesis via DAP pathway; DL-2,6-diaminopimelate from LL-2,6-diaminopimelate: step 1/1. Catalyzes the stereoinversion of LL-2,6-diaminopimelate (L,L-DAP) to meso-diaminopimelate (meso-DAP), a precursor of L-lysine and an essential component of the bacterial peptidoglycan. This chain is Diaminopimelate epimerase, found in Synechococcus elongatus (strain ATCC 33912 / PCC 7942 / FACHB-805) (Anacystis nidulans R2).